Here is a 79-residue protein sequence, read N- to C-terminus: UPF0349 protein BCE_5075 (79 aa).

Belongs to the UPF0349 family.

This Bacillus cereus (strain ATCC 10987 / NRS 248) protein is UPF0349 protein BCE_5075.